The chain runs to 717 residues: Ribosomal RNA large subunit methyltransferase K/L (717 aa).

Positions 45–142 (GAYRICLGSR…DKRSGVQTVQ (98 aa)) constitute a THUMP domain.

Belongs to the methyltransferase superfamily. RlmKL family.

It is found in the cytoplasm. It carries out the reaction guanosine(2445) in 23S rRNA + S-adenosyl-L-methionine = N(2)-methylguanosine(2445) in 23S rRNA + S-adenosyl-L-homocysteine + H(+). The catalysed reaction is guanosine(2069) in 23S rRNA + S-adenosyl-L-methionine = N(2)-methylguanosine(2069) in 23S rRNA + S-adenosyl-L-homocysteine + H(+). In terms of biological role, specifically methylates the guanine in position 2445 (m2G2445) and the guanine in position 2069 (m7G2069) of 23S rRNA. This chain is Ribosomal RNA large subunit methyltransferase K/L, found in Hahella chejuensis (strain KCTC 2396).